The sequence spans 405 residues: Aspartokinase (405 aa).

ACT domains lie at 267–344 and 345–405; these read VSME…AKVS and IVGV…QLDQ.

It belongs to the aspartokinase family.

It catalyses the reaction L-aspartate + ATP = 4-phospho-L-aspartate + ADP. It participates in amino-acid biosynthesis; L-lysine biosynthesis via DAP pathway; (S)-tetrahydrodipicolinate from L-aspartate: step 1/4. Its pathway is amino-acid biosynthesis; L-methionine biosynthesis via de novo pathway; L-homoserine from L-aspartate: step 1/3. The protein operates within amino-acid biosynthesis; L-threonine biosynthesis; L-threonine from L-aspartate: step 1/5. This Helicobacter pylori (strain J99 / ATCC 700824) (Campylobacter pylori J99) protein is Aspartokinase (lysC).